Reading from the N-terminus, the 172-residue chain is uncharacterized protein (172 aa).

Disordered regions lie at residues M1 to N39 and D90 to N112. A compositionally biased stretch (low complexity) spans N98 to S110.

This is an uncharacterized protein from Dictyostelium discoideum (Social amoeba).